The following is a 190-amino-acid chain: Crossover junction endodeoxyribonuclease RuvC (190 aa).

Catalysis depends on residues aspartate 7, glutamate 68, and aspartate 141. Positions 7, 68, and 141 each coordinate Mg(2+).

The protein belongs to the RuvC family. As to quaternary structure, homodimer which binds Holliday junction (HJ) DNA. The HJ becomes 2-fold symmetrical on binding to RuvC with unstacked arms; it has a different conformation from HJ DNA in complex with RuvA. In the full resolvosome a probable DNA-RuvA(4)-RuvB(12)-RuvC(2) complex forms which resolves the HJ. It depends on Mg(2+) as a cofactor.

The protein localises to the cytoplasm. The enzyme catalyses Endonucleolytic cleavage at a junction such as a reciprocal single-stranded crossover between two homologous DNA duplexes (Holliday junction).. Functionally, the RuvA-RuvB-RuvC complex processes Holliday junction (HJ) DNA during genetic recombination and DNA repair. Endonuclease that resolves HJ intermediates. Cleaves cruciform DNA by making single-stranded nicks across the HJ at symmetrical positions within the homologous arms, yielding a 5'-phosphate and a 3'-hydroxyl group; requires a central core of homology in the junction. The consensus cleavage sequence is 5'-(A/T)TT(C/G)-3'. Cleavage occurs on the 3'-side of the TT dinucleotide at the point of strand exchange. HJ branch migration catalyzed by RuvA-RuvB allows RuvC to scan DNA until it finds its consensus sequence, where it cleaves and resolves the cruciform DNA. This is Crossover junction endodeoxyribonuclease RuvC from Endomicrobium trichonymphae.